The following is a 304-amino-acid chain: MSQQRTLNNTIRATGVGLHSGNKIHITLRPAPVNHGIVFRRVDLDPVVEIPASGDLVTEVILCTGLTRNGAKVQTVEHLMSAFAGLGIDNAIVDLSSAELPIMDGSSAPFVFLLQSAGILEQNAAKRFIRIKRSVEVRQGDKVAKFSPYDGYKLGFTIEFDHPMIPHKQSHYEMEFSTAAYIKEISLARTFGFMHDLEDMRERNLGLGGSMDNAILLDDFRVLNEDGLRYGNEFVRHKILDAIGDLYLIGGPILGAYEAFKSGHALNNKLVRAVLADETSWEWISFPSSAAEQPPVVYTHPACI.

Residues His78, His237, and Asp241 each coordinate Zn(2+). Residue His264 is the Proton donor of the active site.

Belongs to the LpxC family. Zn(2+) is required as a cofactor.

The enzyme catalyses a UDP-3-O-[(3R)-3-hydroxyacyl]-N-acetyl-alpha-D-glucosamine + H2O = a UDP-3-O-[(3R)-3-hydroxyacyl]-alpha-D-glucosamine + acetate. It participates in glycolipid biosynthesis; lipid IV(A) biosynthesis; lipid IV(A) from (3R)-3-hydroxytetradecanoyl-[acyl-carrier-protein] and UDP-N-acetyl-alpha-D-glucosamine: step 2/6. Catalyzes the hydrolysis of UDP-3-O-myristoyl-N-acetylglucosamine to form UDP-3-O-myristoylglucosamine and acetate, the committed step in lipid A biosynthesis. The sequence is that of UDP-3-O-acyl-N-acetylglucosamine deacetylase from Xylella fastidiosa (strain 9a5c).